The chain runs to 432 residues: 7-dehydrocholesterol reductase (432 aa).

Transmembrane regions (helical) follow at residues 12–34 (YASMLSLLAFCPPFVILLWYTMV), 64–86 (LIAWKIIFCYGAFEAILQLLLPG), 107–126 (LAAYFVTLATYLGLWWFGIF), 136–155 (GEIFSALIFGSFIFCVLLYI), 195–212 (FTNCRFGMMSWAVLAVTY), 227–249 (MLVNTILMLVYVTKFFWWEAGYW), 261–283 (FYICWGCLVWVPSVYTSPGMYLV), 287–309 (VELGTQLAIYILVAGILCIYINY), and 371–393 (SAFFWTVPALFDNFLAYFYVIFL).

Belongs to the ERG4/ERG24 family.

The protein localises to the endoplasmic reticulum membrane. The catalysed reaction is cholesterol + NADP(+) = 7-dehydrocholesterol + NADPH + H(+). It functions in the pathway lipid metabolism; steroid biosynthesis. In terms of biological role, production of cholesterol by reduction of C7-C8 double bond of 7-dehydrocholesterol (7-DHC). Lesions in the gene coding for the enzyme cause dwarfism. The protein is 7-dehydrocholesterol reductase (DWF5) of Arabidopsis thaliana (Mouse-ear cress).